The primary structure comprises 246 residues: Ribonuclease 3 (246 aa).

The 123-residue stretch at 30 to 152 (ISWIEKNLGH…MIGAIFLESG (123 aa)) folds into the RNase III domain. Glu-65 lines the Mg(2+) pocket. Asp-69 is a catalytic residue. Asp-138 and Glu-141 together coordinate Mg(2+). The active site involves Glu-141. In terms of domain architecture, DRBM spans 177 to 246 (HPKSALQEWA…AQALLDILAQ (70 aa)).

This sequence belongs to the ribonuclease III family. In terms of assembly, homodimer. Mg(2+) is required as a cofactor.

It is found in the cytoplasm. It carries out the reaction Endonucleolytic cleavage to 5'-phosphomonoester.. Functionally, digests double-stranded RNA. Involved in the processing of primary rRNA transcript to yield the immediate precursors to the large and small rRNAs (23S and 16S). Processes some mRNAs, and tRNAs when they are encoded in the rRNA operon. Processes pre-crRNA and tracrRNA of type II CRISPR loci if present in the organism. The chain is Ribonuclease 3 from Zymomonas mobilis subsp. mobilis (strain ATCC 31821 / ZM4 / CP4).